The following is a 460-amino-acid chain: Bifunctional protein GlmU (460 aa).

Residues 1 to 235 (MALSAAIVLA…PLTVEGVNDR (235 aa)) form a pyrophosphorylase region. Residues 9 to 12 (LAAG), Lys23, Gln76, and 81 to 82 (GT) contribute to the UDP-N-acetyl-alpha-D-glucosamine site. Asp109 is a Mg(2+) binding site. Gly146, Glu161, Asn176, and Asn233 together coordinate UDP-N-acetyl-alpha-D-glucosamine. Mg(2+) is bound at residue Asn233. The tract at residues 236 to 256 (VQLAALSKTYNRRVCERWMRD) is linker. Residues 257 to 460 (GVTILDPETT…VEGWKPAWER (204 aa)) are N-acetyltransferase. UDP-N-acetyl-alpha-D-glucosamine is bound by residues Arg338 and Lys356. The Proton acceptor role is filled by His368. UDP-N-acetyl-alpha-D-glucosamine contacts are provided by Tyr371 and Asn382. Acetyl-CoA-binding positions include 391-392 (NY) and Ala428.

The protein in the N-terminal section; belongs to the N-acetylglucosamine-1-phosphate uridyltransferase family. In the C-terminal section; belongs to the transferase hexapeptide repeat family. In terms of assembly, homotrimer. It depends on Mg(2+) as a cofactor.

It is found in the cytoplasm. It catalyses the reaction alpha-D-glucosamine 1-phosphate + acetyl-CoA = N-acetyl-alpha-D-glucosamine 1-phosphate + CoA + H(+). It carries out the reaction N-acetyl-alpha-D-glucosamine 1-phosphate + UTP + H(+) = UDP-N-acetyl-alpha-D-glucosamine + diphosphate. The protein operates within nucleotide-sugar biosynthesis; UDP-N-acetyl-alpha-D-glucosamine biosynthesis; N-acetyl-alpha-D-glucosamine 1-phosphate from alpha-D-glucosamine 6-phosphate (route II): step 2/2. It participates in nucleotide-sugar biosynthesis; UDP-N-acetyl-alpha-D-glucosamine biosynthesis; UDP-N-acetyl-alpha-D-glucosamine from N-acetyl-alpha-D-glucosamine 1-phosphate: step 1/1. It functions in the pathway bacterial outer membrane biogenesis; LPS lipid A biosynthesis. Catalyzes the last two sequential reactions in the de novo biosynthetic pathway for UDP-N-acetylglucosamine (UDP-GlcNAc). The C-terminal domain catalyzes the transfer of acetyl group from acetyl coenzyme A to glucosamine-1-phosphate (GlcN-1-P) to produce N-acetylglucosamine-1-phosphate (GlcNAc-1-P), which is converted into UDP-GlcNAc by the transfer of uridine 5-monophosphate (from uridine 5-triphosphate), a reaction catalyzed by the N-terminal domain. The chain is Bifunctional protein GlmU from Bifidobacterium longum (strain NCC 2705).